The sequence spans 190 residues: Vacuolar protein sorting-associated protein 29 (190 aa).

Belongs to the VPS29 family. In terms of assembly, component of the retromer complex which consists of VPS29 (MAG1), VPS26 (VPS26A or VPS26B), VPS35 (VPS35A or VPS35B or VPS35C), VPS5/17 (SNX1 or SNX2A or SNX2B). Component of a retromer subcomplex consisting of VPS29 (MAG1), VPS26 (VPS26A or VPS26B), VPS35 (VPS35A or VPS35B or VPS35C).

Its subcellular location is the cytoplasm. The protein resides in the endosome membrane. It is found in the prevacuolar compartment membrane. It localises to the golgi apparatus. The protein localises to the trans-Golgi network membrane. Its subcellular location is the late endosome membrane. Functionally, plays a role in vesicular protein sorting. Component of the membrane-associated retromer complex which is essential in endosome-to-Golgi retrograde transport. Required for the auxin-carrier protein PIN2 sorting to the lytic vacuolar pathway and the PIN1 recycling to the plasma membrane, thus influencing auxin transport orientation. Also involved in the efficient sorting of seed storage proteins globulin 12S and albumin 2S. The VPS29-VPS26-VPS35 subcomplex may be involved in recycling of specific cargos from endosome to the plasma membrane. The chain is Vacuolar protein sorting-associated protein 29 from Arabidopsis thaliana (Mouse-ear cress).